Here is a 149-residue protein sequence, read N- to C-terminus: FAD synthase (149 aa).

Residues 10-11, 15-18, Asp95, and Tyr123 each bind ATP; these read TF and HPGH.

It belongs to the archaeal FAD synthase family. As to quaternary structure, homodimer. Co(2+) serves as cofactor.

The catalysed reaction is FMN + ATP + H(+) = FAD + diphosphate. Its pathway is cofactor biosynthesis; FAD biosynthesis; FAD from FMN: step 1/1. With respect to regulation, is inhibited by the product PPi. Functionally, catalyzes the transfer of the AMP portion of ATP to flavin mononucleotide (FMN) to produce flavin adenine dinucleotide (FAD) coenzyme. To a lesser extent, is also able to utilize other nucleotides such as CTP and GTP as substrates, producing the modified coenzymes, flavin cytosine dinucleotide (FCD) and flavin guanine dinucleotide (FGD), respectively. Does not catalyze the reverse reaction to produce FMN and ATP from FAD and PPi. Does not function as a glycerol-3-phosphate cytidylyltransferase, as previously annotated in the complete genome. The protein is FAD synthase (ribL) of Methanocaldococcus jannaschii (strain ATCC 43067 / DSM 2661 / JAL-1 / JCM 10045 / NBRC 100440) (Methanococcus jannaschii).